The following is an 88-amino-acid chain: EKC/KEOPS complex subunit SPAC4H3.13 (88 aa).

This sequence belongs to the CTAG/PCC1 family. As to quaternary structure, component of the EKC/KEOPS complex composed of at least of SPAP27G11.07c/BUD32, cgi121, gon7, pgp2 and SPAC4H3.13/PCC1; the whole complex dimerizes.

Its subcellular location is the cytoplasm. The protein localises to the nucleus. The protein resides in the chromosome. It localises to the telomere. In terms of biological role, component of the EKC/KEOPS complex that is required for the formation of a threonylcarbamoyl group on adenosine at position 37 (t(6)A37) in tRNAs that read codons beginning with adenine. The complex is probably involved in the transfer of the threonylcarbamoyl moiety of threonylcarbamoyl-AMP (TC-AMP) to the N6 group of A37. SPAC4H3.13/PCC1 functions as a dimerization module for the complex. The EKC/KEOPS complex also promotes both telomere uncapping and telomere elongation. The complex is required for efficient recruitment of transcriptional coactivators. The sequence is that of EKC/KEOPS complex subunit SPAC4H3.13 from Schizosaccharomyces pombe (strain 972 / ATCC 24843) (Fission yeast).